Reading from the N-terminus, the 194-residue chain is Thymidylate kinase (194 aa).

ATP is bound at residue 7-14; sequence GIDTAGKS.

The protein belongs to the thymidylate kinase family.

The catalysed reaction is dTMP + ATP = dTDP + ADP. Its function is as follows. Phosphorylation of dTMP to form dTDP in both de novo and salvage pathways of dTTP synthesis. The sequence is that of Thymidylate kinase from Nautilia profundicola (strain ATCC BAA-1463 / DSM 18972 / AmH).